The chain runs to 888 residues: uncharacterized protein (888 aa).

The signal sequence occupies residues 1–20 (MKILKSLVLLVLFIVMPAKA). Transmembrane regions (helical) follow at residues 513–533 (IVKA…VAGA), 565–585 (TYFF…VVGA), 611–631 (LLFI…IITI), 649–669 (VIAF…IILM), 682–702 (ISTL…FLLI), and 781–801 (LLFY…NIVV).

The protein belongs to the TrbL/VirB6 family.

Its subcellular location is the cell membrane. This is an uncharacterized protein from Rickettsia prowazekii (strain Madrid E).